A 527-amino-acid polypeptide reads, in one-letter code: Metal transporter Nramp6 (527 aa).

12 helical membrane passes run 38–58 (FFSYLGPGFLVSIAYIDPGNF), 71–91 (ELLWIILVASCAALVIQSLAA), 115–135 (FMLWVVAEIAVVACDIPEVIG), 143–163 (LFNIPVWIGVLLTGLSTLILL), 173–193 (LEFLIAFLVFTIALCFFVELH), 221–241 (ISLLGAMVMPHNLFLHSALVL), 264–284 (GLALMVAFLINVSVISVSGAV), 321–341 (LFAIALLASGQSSTITGTYAG), 364–384 (CLAIIPSLIVALIGGSAGAGK), 385–405 (LIIIASMILSFELPFALVPLL), 427–447 (TWIIGGLIMGINIYYLVSSFI), and 458–478 (VAIVFLGVLGFSGIATYLAAI).

It belongs to the NRAMP (TC 2.A.55) family. In terms of tissue distribution, expressed in the vascular bundles of shoots, cotyledons, young leaves, sepals and petals, at the top of the flower stem and in the style. Expressed in the peduncle of developing siliques as well as in the septum and the funiculi.

The protein resides in the endomembrane system. Probable intracellular cadmium (Cd) transporter that participates in the distribution or availability of Cd within the cell. This Arabidopsis thaliana (Mouse-ear cress) protein is Metal transporter Nramp6 (NRAMP6).